Consider the following 340-residue polypeptide: S-adenosylmethionine:tRNA ribosyltransferase-isomerase (340 aa).

Belongs to the QueA family. As to quaternary structure, monomer.

It localises to the cytoplasm. It catalyses the reaction 7-aminomethyl-7-carbaguanosine(34) in tRNA + S-adenosyl-L-methionine = epoxyqueuosine(34) in tRNA + adenine + L-methionine + 2 H(+). It participates in tRNA modification; tRNA-queuosine biosynthesis. Functionally, transfers and isomerizes the ribose moiety from AdoMet to the 7-aminomethyl group of 7-deazaguanine (preQ1-tRNA) to give epoxyqueuosine (oQ-tRNA). The chain is S-adenosylmethionine:tRNA ribosyltransferase-isomerase from Aliarcobacter butzleri (strain RM4018) (Arcobacter butzleri).